The sequence spans 908 residues: DNA mismatch repair protein MutS (908 aa).

Glycine 629 to serine 636 contacts ATP. The interval alanine 822–asparagine 863 is disordered.

Belongs to the DNA mismatch repair MutS family.

This protein is involved in the repair of mismatches in DNA. It is possible that it carries out the mismatch recognition step. This protein has a weak ATPase activity. This is DNA mismatch repair protein MutS from Salinibacter ruber (strain DSM 13855 / M31).